The following is a 438-amino-acid chain: Probable tRNA pseudouridine synthase D (438 aa).

D86 (nucleophile) is an active-site residue. The 226-residue stretch at 165 to 390 folds into the TRUD domain; it reads GVPNFFGIQR…SKGTRRELLL (226 aa).

Belongs to the pseudouridine synthase TruD family.

It catalyses the reaction uridine(13) in tRNA = pseudouridine(13) in tRNA. Could be responsible for synthesis of pseudouridine from uracil-13 in transfer RNAs. In Methanosarcina barkeri (strain Fusaro / DSM 804), this protein is Probable tRNA pseudouridine synthase D.